The chain runs to 724 residues: Phosphoribosylformylglycinamidine synthase subunit PurL (724 aa).

His-34 is a catalytic residue. Tyr-37 is an ATP binding site. Mg(2+) is bound at residue Glu-78. Residues 79-82 (SHNH) and Arg-101 each bind substrate. The active-site Proton acceptor is His-80. A Mg(2+)-binding site is contributed by Asp-102. Gln-226 provides a ligand contact to substrate. Mg(2+) is bound at residue Asp-254. 298–300 (ESQ) provides a ligand contact to substrate. ATP is bound by residues Asp-480 and Gly-517. A Mg(2+)-binding site is contributed by Asn-518. Residue Ser-520 participates in substrate binding.

Belongs to the FGAMS family. As to quaternary structure, monomer. Part of the FGAM synthase complex composed of 1 PurL, 1 PurQ and 2 PurS subunits.

Its subcellular location is the cytoplasm. It catalyses the reaction N(2)-formyl-N(1)-(5-phospho-beta-D-ribosyl)glycinamide + L-glutamine + ATP + H2O = 2-formamido-N(1)-(5-O-phospho-beta-D-ribosyl)acetamidine + L-glutamate + ADP + phosphate + H(+). The protein operates within purine metabolism; IMP biosynthesis via de novo pathway; 5-amino-1-(5-phospho-D-ribosyl)imidazole from N(2)-formyl-N(1)-(5-phospho-D-ribosyl)glycinamide: step 1/2. Part of the phosphoribosylformylglycinamidine synthase complex involved in the purines biosynthetic pathway. Catalyzes the ATP-dependent conversion of formylglycinamide ribonucleotide (FGAR) and glutamine to yield formylglycinamidine ribonucleotide (FGAM) and glutamate. The FGAM synthase complex is composed of three subunits. PurQ produces an ammonia molecule by converting glutamine to glutamate. PurL transfers the ammonia molecule to FGAR to form FGAM in an ATP-dependent manner. PurS interacts with PurQ and PurL and is thought to assist in the transfer of the ammonia molecule from PurQ to PurL. The polypeptide is Phosphoribosylformylglycinamidine synthase subunit PurL (Methanopyrus kandleri (strain AV19 / DSM 6324 / JCM 9639 / NBRC 100938)).